A 403-amino-acid polypeptide reads, in one-letter code: Acetate kinase (403 aa).

N7 is a Mg(2+) binding site. K14 is an ATP binding site. R95 is a binding site for substrate. D152 serves as the catalytic Proton donor/acceptor. ATP is bound by residues 212–216 (HLGNG), 286–288 (DMR), and 335–339 (GIGEN). A Mg(2+)-binding site is contributed by E389.

It belongs to the acetokinase family. Homodimer. Requires Mg(2+) as cofactor. Mn(2+) serves as cofactor.

It is found in the cytoplasm. It carries out the reaction acetate + ATP = acetyl phosphate + ADP. The protein operates within metabolic intermediate biosynthesis; acetyl-CoA biosynthesis; acetyl-CoA from acetate: step 1/2. In terms of biological role, catalyzes the formation of acetyl phosphate from acetate and ATP. Can also catalyze the reverse reaction. The polypeptide is Acetate kinase (Desulfovibrio desulfuricans (strain ATCC 27774 / DSM 6949 / MB)).